The following is a 270-amino-acid chain: Ribosomal RNA small subunit methyltransferase J (270 aa).

S-adenosyl-L-methionine-binding positions include 126–127 (ER) and Asp-182.

This sequence belongs to the methyltransferase superfamily. RsmJ family.

The protein localises to the cytoplasm. The catalysed reaction is guanosine(1516) in 16S rRNA + S-adenosyl-L-methionine = N(2)-methylguanosine(1516) in 16S rRNA + S-adenosyl-L-homocysteine + H(+). Specifically methylates the guanosine in position 1516 of 16S rRNA. The protein is Ribosomal RNA small subunit methyltransferase J of Acinetobacter baylyi (strain ATCC 33305 / BD413 / ADP1).